Here is a 594-residue protein sequence, read N- to C-terminus: Putative diflavin flavoprotein A 4 (594 aa).

Positions 57–250 (RRGTTSNSYL…LTLKMIAPGH (194 aa)) are zinc metallo-hydrolase. The Flavodoxin-like domain occupies 279–417 (VALIYASAYG…VCTTSGANFA (139 aa)). The tract at residues 445–594 (VGRIIGSIGV…IRHRKSGGQY (150 aa)) is flavodoxin-reductase-like.

This sequence in the N-terminal section; belongs to the zinc metallo-hydrolase group 3 family. In the C-terminal section; belongs to the flavodoxin reductase family. The cofactor is Fe cation.

Mediates electron transfer from NADH to oxygen, reducing it to water. This modular protein has 3 redox cofactors, in other organisms the same activity requires 2 or 3 proteins. This is Putative diflavin flavoprotein A 4 (dfa4) from Synechocystis sp. (strain ATCC 27184 / PCC 6803 / Kazusa).